Reading from the N-terminus, the 253-residue chain is Diphthine synthase (253 aa).

Residues Asp83, Leu86, 111-112 (SI), Leu163, and Leu205 contribute to the S-adenosyl-L-methionine site.

This sequence belongs to the diphthine synthase family. As to quaternary structure, homodimer.

It carries out the reaction 2-[(3S)-amino-3-carboxypropyl]-L-histidyl-[translation elongation factor 2] + 3 S-adenosyl-L-methionine = diphthine-[translation elongation factor 2] + 3 S-adenosyl-L-homocysteine + 3 H(+). Its pathway is protein modification; peptidyl-diphthamide biosynthesis. Functionally, S-adenosyl-L-methionine-dependent methyltransferase that catalyzes the trimethylation of the amino group of the modified target histidine residue in translation elongation factor 2 (EF-2), to form an intermediate called diphthine. The three successive methylation reactions represent the second step of diphthamide biosynthesis. The polypeptide is Diphthine synthase (Pyrobaculum neutrophilum (strain DSM 2338 / JCM 9278 / NBRC 100436 / V24Sta) (Thermoproteus neutrophilus)).